Consider the following 356-residue polypeptide: Inositol phosphoceramide mannosyltransferase 3 (356 aa).

A helical membrane pass occupies residues 4 to 24 (ILFYFFFFLTLILSATVYLFG). Asn52 and Asn146 each carry an N-linked (GlcNAc...) asparagine glycan. 2 helical membrane passes run 197–217 (FPYL…IWSA) and 269–289 (WAIF…FIFG). Phosphoserine is present on residues Ser307, Ser353, and Ser355.

It belongs to the glycosyltransferase 32 family.

Its subcellular location is the endoplasmic reticulum membrane. It is found in the golgi apparatus. The protein localises to the cis-Golgi network membrane. It localises to the trans-Golgi network membrane. In terms of biological role, with imt1 and imt2, is required for the synthesis of mannosylinositol phosphoceramide (MIPC). Catalyzes the addition of mannosyl to inositol phosphoceramide (IPC). MIPC is essential for cell morphology, cell-surface distribution of ergosterol, localization for plasma-membrane transporters, and lipid-raft-mediated endocytosis of plasma membrane proteins to the vacuole. The chain is Inositol phosphoceramide mannosyltransferase 3 from Schizosaccharomyces pombe (strain 972 / ATCC 24843) (Fission yeast).